The primary structure comprises 978 residues: Exocyst complex component 5 (978 aa).

Positions 1 to 11 are enriched in polar residues; the sequence is MSWARNIQSRI. 2 disordered regions span residues 1 to 87 and 122 to 246; these read MSWA…TTTQ and TSPS…TTPY. 2 stretches are compositionally biased toward low complexity: residues 36–52 and 62–86; these read PSSP…TSLT and SQPT…TTTT. Residues 122-142 show a composition bias toward polar residues; the sequence is TSPSMASPIGTSTGIQNPNAK. The span at 143-245 shows a compositional bias: low complexity; sequence PSSLPSPSQS…QPTPIKQTTP (103 aa). The stretch at 303 to 325 forms a coiled coil; that stretch reads NTQLQLSQLESNIDRRLDDLAEE.

The protein belongs to the SEC10 family. In terms of assembly, the exocyst complex is composed of sec3/exoc1, sec5/exoc2, sec6/exoc3, sec8/exoc4, sec10/exoc5, sec15/exoc6, exo70/exoc7 and exo84/exoc8.

Functionally, component of the exocyst complex involved in the docking of exocytic vesicles with fusion sites on the plasma membrane. The polypeptide is Exocyst complex component 5 (exoc5) (Dictyostelium discoideum (Social amoeba)).